Consider the following 180-residue polypeptide: Thebaine synthase 1 (180 aa).

S96 is a binding site for thebaine. The active-site Proton acceptor is the H111. T127 lines the thebaine pocket.

This sequence belongs to the MLP family. Homodimer (allosteric) and oligomers. In terms of tissue distribution, expressed in poppy latex.

It catalyses the reaction (7S)-O-acetylsalutaridinol = thebaine + acetate + H(+). It participates in alkaloid biosynthesis; morphine biosynthesis. Its function is as follows. Catalyzes the formation of thebaine from (7S)-salutaridinol 7-O-acetate at the expense of labile hydroxylated by-products, which are preferentially produced by spontaneous allylic elimination. This chain is Thebaine synthase 1, found in Papaver somniferum (Opium poppy).